The chain runs to 462 residues: Glycoprotein endo-alpha-1,2-mannosidase (462 aa).

Residues 1 to 8 lie on the Cytoplasmic side of the membrane; sequence MAKFRRRT. The helical; Signal-anchor for type II membrane protein transmembrane segment at 9-29 threads the bilayer; that stretch reads CIILALFILFIFSLMMGLKML. Over 30–462 the chain is Lumenal; the sequence is RPNTATFGAP…YALDRQLPVS (433 aa). The interval 60–462 is catalytic; the sequence is DFQKSDRINS…YALDRQLPVS (403 aa).

It belongs to the glycosyl hydrolase 99 family. In terms of processing, undergoes proteolytic cleavage in the C-terminal region. In terms of tissue distribution, highly expressed in the liver and kidney. Expressed at lower levels in muscle, pancreas, heart, placenta, lung and brain.

It localises to the golgi apparatus membrane. The enzyme catalyses N-{alpha-Glc-(1-&gt;3)-alpha-Man-(1-&gt;2)-alpha-Man-(1-&gt;2)-alpha-Man-(1-&gt;3)-[alpha-Man-(1-&gt;2)-alpha-Man-(1-&gt;3)-[alpha-Man-(1-&gt;2)-alpha-Man-(1-&gt;6)]-alpha-Man-(1-&gt;6)]-beta-Man-(1-&gt;4)-beta-GlcNAc-(1-&gt;4)-beta-GlcNAc}-L-asparaginyl-[protein] + H2O = alpha-D-glucosyl-(1-&gt;3)-D-mannopyranose + N(4)-{alpha-D-Man-(1-&gt;2)-alpha-D-Man-(1-&gt;3)-[alpha-D-Man-(1-&gt;2)-alpha-D-Man-(1-&gt;3)-[alpha-D-Man-(1-&gt;2)-alpha-D-Man-(1-&gt;6)]-alpha-D-Man-(1-&gt;6)]-beta-D-Man-(1-&gt;4)-beta-D-GlaNAc-(1-&gt;4)-beta-D-GlcNAc}-L-asparaginyl-[protein] (N-glucan mannose isomer 8A1,2,3B1,2). The chain is Glycoprotein endo-alpha-1,2-mannosidase (MANEA) from Homo sapiens (Human).